Reading from the N-terminus, the 840-residue chain is Radial spoke head 10 homolog B (840 aa).

Composition is skewed to basic and acidic residues over residues 1 to 16 and 51 to 63; these read MVKE…DKSA and QPKD…EVKS. The segment at 1–74 is disordered; the sequence is MVKEKKKADK…SLPNEDTTQY (74 aa). MORN repeat units follow at residues 86–108, 109–131, 132–154, 155–177, 179–201, 204–226, 227–249, 251–273, 284–306, and 307–329; these read SYEG…QGGC, TYQG…ADGL, KYEG…PDGS, TYEG…STQP, SYIG…NQEG, WYEG…KSGN, IYEG…LTTN, EYTG…FLKR, EYVG…ASGA, and MYEG…KNGR. The stretch at 758 to 801 forms a coiled coil; it reads KEKVKENRLHNEAMALQRKMENEELEARLNSLREEEAKRQDYEV. The segment at 810 to 840 is disordered; that stretch reads VDAPSSSFTPSPPKEDTVVSSKSITSKKKKK.

In terms of assembly, interacts with RSPH6A. Does not appear to be part of the axonemal radial spoke complexes 1 or 2.

The protein resides in the cytoplasm. It localises to the cytoskeleton. Its subcellular location is the cilium axoneme. It is found in the cell projection. The protein localises to the cilium. The protein resides in the flagellum. In terms of biological role, may function as part of the axonemal radial spoke complex 3 (RS3). Radial spoke complexes are important for ciliary motility. This chain is Radial spoke head 10 homolog B (RSPH10B), found in Bos taurus (Bovine).